The primary structure comprises 215 residues: MLDREGFRPNVGIILLNARNEVFWGKRLREHSWQFPQGGIKYGETPMQAMYRELHEETGLHPEHVKIIGRTRDWLRYEVPDKFIKREVRGHYRGQKQIWFLLRMVGRDCDICLRATDHPEFDAWRWNEYWVPLDAVIEFKRDVYQLALTELSRFLRRPAQRAEKPRGPRPLRYPRIGGAPAQQTLTIVDTSVVCSEIEVEARTLDEMPPRVIIGK.

In terms of domain architecture, Nudix hydrolase spans 6–149 (GFRPNVGIIL…KRDVYQLALT (144 aa)). A Nudix box motif is present at residues 38-59 (GGIKYGETPMQAMYRELHEETG).

The protein belongs to the Nudix hydrolase family. RppH subfamily. A divalent metal cation serves as cofactor.

Its function is as follows. Accelerates the degradation of transcripts by removing pyrophosphate from the 5'-end of triphosphorylated RNA, leading to a more labile monophosphorylated state that can stimulate subsequent ribonuclease cleavage. The protein is RNA pyrophosphohydrolase of Burkholderia vietnamiensis (strain G4 / LMG 22486) (Burkholderia cepacia (strain R1808)).